The sequence spans 343 residues: Probable potassium channel protein 2 (343 aa).

The Cytoplasmic segment spans residues 1–7; sequence METSKKL. Residues 8–28 traverse the membrane as a helical segment; it reads VIVAVLSITLILTYAYLISII. Over 29-61 the chain is Extracellular; it reads EGVDYFTALYFSVITITTTGYGDFTPKTFLGRT. A Selectivity filter motif is present at residues 46–51; the sequence is TTGYGD. A helical membrane pass occupies residues 62–82; sequence LTVVYLCVGVGIVMYLFSLIA. Over 83 to 343 the chain is Cytoplasmic; sequence EFIVEGKFEE…NLVKKKKKKL (261 aa). The region spanning 107 to 227 is the RCK N-terminal domain; sequence KDHYIICGYG…KIAGANRVVS (121 aa). The RCK C-terminal domain occupies 253–338; that stretch reads IKIAKDEYEE…LKYLENLVKK (86 aa).

It localises to the cell membrane. Functionally, probable potassium channel protein. The protein is Probable potassium channel protein 2 of Methanocaldococcus jannaschii (strain ATCC 43067 / DSM 2661 / JAL-1 / JCM 10045 / NBRC 100440) (Methanococcus jannaschii).